We begin with the raw amino-acid sequence, 451 residues long: Cytochrome c biogenesis protein CcsB (451 aa).

3 helical membrane passes run 30–50 (LRLAIVLLLAIALFSISGTVI), 89–109 (TWWFLSLLVLFGTSLTTCTFT), and 175–195 (IGPIVVHAAMLIILGGAIWGA).

It belongs to the Ccs1/CcsB family. May interact with CcsA.

The protein localises to the cellular thylakoid membrane. Required during biogenesis of c-type cytochromes (cytochrome c6 and cytochrome f) at the step of heme attachment. This is Cytochrome c biogenesis protein CcsB from Crocosphaera subtropica (strain ATCC 51142 / BH68) (Cyanothece sp. (strain ATCC 51142)).